Here is a 272-residue protein sequence, read N- to C-terminus: Phosphatidylglycerol--prolipoprotein diacylglyceryl transferase (272 aa).

The next 3 helical transmembrane spans lie at 19–39 (ISIR…YFLV), 58–78 (LNTV…VVFY), and 94–114 (WHGG…GLIF). Residue arginine 141 coordinates a 1,2-diacyl-sn-glycero-3-phospho-(1'-sn-glycerol). The next 2 helical transmembrane spans lie at 207-227 (GTIL…IENF) and 234-254 (LGFI…MILC).

It belongs to the Lgt family.

The protein resides in the cell inner membrane. The enzyme catalyses L-cysteinyl-[prolipoprotein] + a 1,2-diacyl-sn-glycero-3-phospho-(1'-sn-glycerol) = an S-1,2-diacyl-sn-glyceryl-L-cysteinyl-[prolipoprotein] + sn-glycerol 1-phosphate + H(+). The protein operates within protein modification; lipoprotein biosynthesis (diacylglyceryl transfer). Functionally, catalyzes the transfer of the diacylglyceryl group from phosphatidylglycerol to the sulfhydryl group of the N-terminal cysteine of a prolipoprotein, the first step in the formation of mature lipoproteins. This Desulfotalea psychrophila (strain LSv54 / DSM 12343) protein is Phosphatidylglycerol--prolipoprotein diacylglyceryl transferase.